The following is a 208-amino-acid chain: Fibroblast growth factor 10 (208 aa).

Positions 1–37 (MWKWILTHCASAFPHLPGCCCCCFLLLFLVSSVPVTC) are cleaved as a signal peptide. N-linked (GlcNAc...) asparagine glycosylation is found at N51 and N196.

Belongs to the heparin-binding growth factors family. As to quaternary structure, interacts with FGFR1 and FGFR2. Interacts with FGFBP1.

It is found in the secreted. Functionally, plays an important role in the regulation of embryonic development, cell proliferation and cell differentiation. Required for normal branching morphogenesis. May play a role in wound healing. The chain is Fibroblast growth factor 10 (FGF10) from Homo sapiens (Human).